Reading from the N-terminus, the 209-residue chain is Protocatechuate 3,4-dioxygenase alpha chain (209 aa).

Arginine 142 contacts 3,4-dihydroxybenzoate.

The protein belongs to the intradiol ring-cleavage dioxygenase family. The enzyme is an oligomer of 12 copies of the alpha and beta chains. Fe(3+) serves as cofactor.

The catalysed reaction is 3,4-dihydroxybenzoate + O2 = 3-carboxy-cis,cis-muconate + 2 H(+). It functions in the pathway aromatic compound metabolism; beta-ketoadipate pathway; 3-carboxy-cis,cis-muconate from 3,4-dihydroxybenzoate: step 1/1. Its function is as follows. Plays an essential role in the utilization of numerous aromatic and hydroaromatic compounds via the beta-ketoadipate pathway. This chain is Protocatechuate 3,4-dioxygenase alpha chain (pcaG), found in Acinetobacter baylyi (strain ATCC 33305 / BD413 / ADP1).